A 149-amino-acid polypeptide reads, in one-letter code: Myoglobin (149 aa).

Val2 carries the post-translational modification N-acetylvaline. A Globin domain is found at Val2–Lys143. His89 contacts heme b.

The protein belongs to the globin family. In terms of assembly, monomeric.

It is found in the cytoplasm. Its subcellular location is the sarcoplasm. It catalyses the reaction Fe(III)-heme b-[protein] + nitric oxide + H2O = Fe(II)-heme b-[protein] + nitrite + 2 H(+). The enzyme catalyses H2O2 + AH2 = A + 2 H2O. Its function is as follows. Monomeric heme protein which primary function is to store oxygen and facilitate its diffusion within muscle tissues. Reversibly binds oxygen through a pentacoordinated heme iron and enables its timely and efficient release as needed during periods of heightened demand. Depending on the oxidative conditions of tissues and cells, and in addition to its ability to bind oxygen, it also has a nitrite reductase activity whereby it regulates the production of bioactive nitric oxide. Under stress conditions, like hypoxia and anoxia, it also protects cells against reactive oxygen species thanks to its pseudoperoxidase activity. The chain is Myoglobin (mb) from Mustelus antarcticus (Gummy shark).